Here is a 103-residue protein sequence, read N- to C-terminus: Co-chaperonin GroES (103 aa).

Belongs to the GroES chaperonin family. Heptamer of 7 subunits arranged in a ring. Interacts with the chaperonin GroEL.

It is found in the cytoplasm. In terms of biological role, together with the chaperonin GroEL, plays an essential role in assisting protein folding. The GroEL-GroES system forms a nano-cage that allows encapsulation of the non-native substrate proteins and provides a physical environment optimized to promote and accelerate protein folding. GroES binds to the apical surface of the GroEL ring, thereby capping the opening of the GroEL channel. In Microcystis aeruginosa (strain NIES-843 / IAM M-2473), this protein is Co-chaperonin GroES.